The chain runs to 192 residues: Ion-translocating oxidoreductase complex subunit A (192 aa).

6 consecutive transmembrane segments (helical) span residues 5-25 (LLLL…FLGL), 39-59 (IGMS…SYLV), 65-85 (LPFD…AVVV), 102-122 (ALGI…VALL), 134-154 (AIYG…FSAM), and 171-191 (AIAM…TGLV).

Belongs to the NqrDE/RnfAE family. In terms of assembly, the complex is composed of six subunits: RnfA, RnfB, RnfC, RnfD, RnfE and RnfG.

The protein resides in the cell inner membrane. Its function is as follows. Part of a membrane-bound complex that couples electron transfer with translocation of ions across the membrane. The chain is Ion-translocating oxidoreductase complex subunit A from Shewanella sp. (strain MR-4).